The sequence spans 811 residues: Potassium transporter 27 (811 aa).

Over 1-64 (MGDDVLGRGS…QEESWARTLK (64 aa)) the chain is Cytoplasmic. A helical transmembrane segment spans residues 65–85 (LAFQCVGILYGDIGTSPLFVY). Residues 86-102 (SSTFKDGVRHPDDLLGA) lie on the Extracellular side of the membrane. Residues 103–123 (LSLIIYSFALFTIVKYVFIAL) form a helical membrane-spanning segment. Residues 124–188 (RANDDGDGGT…ELLETNRAVK (65 aa)) are Cytoplasmic-facing. Residues 189–209 (IWLFLLTILATAMVISDAVLT) traverse the membrane as a helical segment. The Extracellular segment spans residues 210–226 (PAISVLSAVGGLKEKAP). A helical membrane pass occupies residues 227-247 (NLTTDEIVWITVATLVVLFAI). At 248-254 (QRFGTDK) the chain is on the cytoplasmic side. A helical membrane pass occupies residues 255–275 (IGYLFAPIILLWLLLIGCVGI). Residues 276 to 310 (YNTIKFDTGVLRAFNLKYIIDYFRRNKKDGWISLS) are Extracellular-facing. A helical transmembrane segment spans residues 311-331 (GILLCFTGTEALFSDLGYFSI). Residues 332 to 335 (RSIQ) are Cytoplasmic-facing. Residues 336-356 (LSFSFGLVPSVLLAYIGQAAY) form a helical membrane-spanning segment. The Extracellular segment spans residues 357–375 (LREHPEHIANTFYRSTPNV). The chain crosses the membrane as a helical span at residues 376–396 (MFWPTFILAVAASIIGSQAMI). The Cytoplasmic portion of the chain corresponds to 397–434 (SCAFATISHLQTLNCFPRVKILHTSRQYSGQLYIPEVN). The helical transmembrane segment at 435–455 (FLLCVGACLVTIGFKTTVIIG) threads the bilayer. Over 456–459 (EAHA) the chain is Extracellular. Residues 460–480 (ICVVFVMIITTLLLTIVMLLV) traverse the membrane as a helical segment. Over 481–482 (WK) the chain is Cytoplasmic. Residues 483–503 (VSIWYVALFFIVFMSSESIYL) traverse the membrane as a helical segment. At 504 to 515 (SAVLYQFVHGEY) the chain is on the extracellular side. A helical transmembrane segment spans residues 516 to 536 (VPVAMSVFLMIVMTVWHYVHV). The Cytoplasmic segment spans residues 537–811 (KRYEFELEHT…VLKVGIAYEI (275 aa)).

Belongs to the HAK/KUP transporter (TC 2.A.72.3) family.

Its subcellular location is the membrane. In terms of biological role, high-affinity potassium transporter. The sequence is that of Potassium transporter 27 (HAK27) from Oryza sativa subsp. japonica (Rice).